A 309-amino-acid chain; its full sequence is Formimidoylglutamase (309 aa).

Mn(2+)-binding residues include histidine 120, aspartate 145, histidine 147, aspartate 149, aspartate 236, and aspartate 238.

This sequence belongs to the arginase family. Mn(2+) is required as a cofactor.

It carries out the reaction N-formimidoyl-L-glutamate + H2O = formamide + L-glutamate. The protein operates within amino-acid degradation; L-histidine degradation into L-glutamate; L-glutamate from N-formimidoyl-L-glutamate (hydrolase route): step 1/1. Functionally, catalyzes the conversion of N-formimidoyl-L-glutamate to L-glutamate and formamide. In Chromobacterium violaceum (strain ATCC 12472 / DSM 30191 / JCM 1249 / CCUG 213 / NBRC 12614 / NCIMB 9131 / NCTC 9757 / MK), this protein is Formimidoylglutamase.